Reading from the N-terminus, the 360-residue chain is Mitogen-activated protein kinase 14 (360 aa).

Ser-2 carries the N-acetylserine modification. Ser-2 bears the Phosphoserine mark. A Phosphothreonine modification is found at Thr-16. The Protein kinase domain occupies 24 to 308 (YQNLSPVGSG…AAQALAHAYF (285 aa)). Residues 30-38 (VGSGAYGSV) and Lys-53 each bind ATP. Lys-53 bears the N6-acetyllysine mark. Asp-150 (proton acceptor) is an active-site residue. An N6-acetyllysine modification is found at Lys-152. Thr-180 is subject to Phosphothreonine; by MAP2K3, MAP2K4, MAP2K6 and autocatalysis. Phosphotyrosine; by MAP2K3, MAP2K4, MAP2K6 and autocatalysis is present on Tyr-182. Thr-263 carries the phosphothreonine modification. Tyr-323 carries the post-translational modification Phosphotyrosine; by ZAP70.

It belongs to the protein kinase superfamily. CMGC Ser/Thr protein kinase family. MAP kinase subfamily. As to quaternary structure, component of a signaling complex containing at least AKAP13, PKN1, MAPK14, ZAK and MAP2K3. Within this complex, AKAP13 interacts directly with PKN1, which in turn recruits MAPK14, MAP2K3 and ZAK. Binds to a kinase interaction motif within the protein tyrosine phosphatase, PTPRR. This interaction retains MAPK14 in the cytoplasm and prevents nuclear accumulation. Interacts with SPAG9 and GADD45A. Interacts with CDC25B, CDC25C, DUSP1, DUSP10, DUSP16, NP60, SUPT20H and TAB1. Interacts with casein kinase II subunits CSNK2A1 and CSNK2B. Interacts with PPM1D. Interacts with CDK5RAP3; recruits PPM1D to MAPK14 and may regulate its dephosphorylation. Interacts with DUSP2; this interaction does not lead to catalytic activation of DUSP2 and dephosphrylation of MAPK14. It depends on Mg(2+) as a cofactor. Post-translationally, dually phosphorylated on Thr-180 and Tyr-182 by the MAP2Ks MAP2K3/MKK3, MAP2K4/MKK4 and MAP2K6/MKK6 in response to inflammatory cytokines, environmental stress or growth factors, which activates the enzyme. Dual phosphorylation can also be mediated by TAB1-mediated autophosphorylation. TCR engagement in T-cells also leads to Tyr-323 phosphorylation by ZAP70. Dephosphorylated and inactivated by DUPS1, DUSP10 and DUSP16. PPM1D also mediates dephosphorylation and inactivation of MAPK14. In terms of processing, acetylated at Lys-53 and Lys-152 by KAT2B and EP300. Acetylation at Lys-53 increases the affinity for ATP and enhances kinase activity. Lys-53 and Lys-152 are deacetylated by HDAC3. Ubiquitinated. Ubiquitination leads to degradation by the proteasome pathway.

The protein resides in the cytoplasm. The protein localises to the nucleus. The enzyme catalyses L-seryl-[protein] + ATP = O-phospho-L-seryl-[protein] + ADP + H(+). The catalysed reaction is L-threonyl-[protein] + ATP = O-phospho-L-threonyl-[protein] + ADP + H(+). Its activity is regulated as follows. Activated by cell stresses such as DNA damage, heat shock, osmotic shock, anisomycin and sodium arsenite, as well as pro-inflammatory stimuli such as bacterial lipopolysaccharide (LPS) and interleukin-1. Activation occurs through dual phosphorylation of Thr-180 and Tyr-182 by either of two dual specificity kinases, MAP2K3/MKK3 or MAP2K6/MKK6, and potentially also MAP2K4/MKK4, as well as by TAB1-mediated autophosphorylation. MAPK14 phosphorylated on both Thr-180 and Tyr-182 is 10-20-fold more active than MAPK14 phosphorylated only on Thr-180, whereas MAPK14 phosphorylated on Tyr-182 alone is inactive. whereas Thr-180 is necessary for catalysis, Tyr-182 may be required for auto-activation and substrate recognition. Phosphorylated at Tyr-323 by ZAP70 in an alternative activation pathway in response to TCR signaling in T-cells. This alternative pathway is inhibited by GADD45A. Inhibited by dual specificity phosphatases, such as DUSP1, DUSP10, and DUSP16. Specifically inhibited by the binding of pyridinyl-imidazole compounds, which are cytokine-suppressive anti-inflammatory drugs (CSAID). SB203580 is an inhibitor of MAPK14. In terms of biological role, serine/threonine kinase which acts as an essential component of the MAP kinase signal transduction pathway. MAPK14 is one of the four p38 MAPKs which play an important role in the cascades of cellular responses evoked by extracellular stimuli such as pro-inflammatory cytokines or physical stress leading to direct activation of transcription factors. Accordingly, p38 MAPKs phosphorylate a broad range of proteins and it has been estimated that they may have approximately 200 to 300 substrates each. Some of the targets are downstream kinases which are activated through phosphorylation and further phosphorylate additional targets. RPS6KA5/MSK1 and RPS6KA4/MSK2 can directly phosphorylate and activate transcription factors such as CREB1, ATF1, the NF-kappa-B isoform RELA/NFKB3, STAT1 and STAT3, but can also phosphorylate histone H3 and the nucleosomal protein HMGN1. RPS6KA5/MSK1 and RPS6KA4/MSK2 play important roles in the rapid induction of immediate-early genes in response to stress or mitogenic stimuli, either by inducing chromatin remodeling or by recruiting the transcription machinery. On the other hand, two other kinase targets, MAPKAPK2/MK2 and MAPKAPK3/MK3, participate in the control of gene expression mostly at the post-transcriptional level, by phosphorylating ZFP36 (tristetraprolin) and ELAVL1, and by regulating EEF2K, which is important for the elongation of mRNA during translation. MKNK1/MNK1 and MKNK2/MNK2, two other kinases activated by p38 MAPKs, regulate protein synthesis by phosphorylating the initiation factor EIF4E2. MAPK14 also interacts with casein kinase II, leading to its activation through autophosphorylation and further phosphorylation of TP53/p53. In the cytoplasm, the p38 MAPK pathway is an important regulator of protein turnover. For example, CFLAR is an inhibitor of TNF-induced apoptosis whose proteasome-mediated degradation is regulated by p38 MAPK phosphorylation. In a similar way, MAPK14 phosphorylates the ubiquitin ligase SIAH2, regulating its activity towards EGLN3. MAPK14 may also inhibit the lysosomal degradation pathway of autophagy by interfering with the intracellular trafficking of the transmembrane protein ATG9. Another function of MAPK14 is to regulate the endocytosis of membrane receptors by different mechanisms that impinge on the small GTPase RAB5A. In addition, clathrin-mediated EGFR internalization induced by inflammatory cytokines and UV irradiation depends on MAPK14-mediated phosphorylation of EGFR itself as well as of RAB5A effectors. Ectodomain shedding of transmembrane proteins is regulated by p38 MAPKs as well. In response to inflammatory stimuli, p38 MAPKs phosphorylate the membrane-associated metalloprotease ADAM17. Such phosphorylation is required for ADAM17-mediated ectodomain shedding of TGF-alpha family ligands, which results in the activation of EGFR signaling and cell proliferation. Another p38 MAPK substrate is FGFR1. FGFR1 can be translocated from the extracellular space into the cytosol and nucleus of target cells, and regulates processes such as rRNA synthesis and cell growth. FGFR1 translocation requires p38 MAPK activation. In the nucleus, many transcription factors are phosphorylated and activated by p38 MAPKs in response to different stimuli. Classical examples include ATF1, ATF2, ATF6, ELK1, PTPRH, DDIT3, TP53/p53 and MEF2C and MEF2A. The p38 MAPKs are emerging as important modulators of gene expression by regulating chromatin modifiers and remodelers. The promoters of several genes involved in the inflammatory response, such as IL6, IL8 and IL12B, display a p38 MAPK-dependent enrichment of histone H3 phosphorylation on 'Ser-10' (H3S10ph) in LPS-stimulated myeloid cells. This phosphorylation enhances the accessibility of the cryptic NF-kappa-B-binding sites marking promoters for increased NF-kappa-B recruitment. Phosphorylates CDC25B and CDC25C which is required for binding to 14-3-3 proteins and leads to initiation of a G2 delay after ultraviolet radiation. Phosphorylates TIAR following DNA damage, releasing TIAR from GADD45A mRNA and preventing mRNA degradation. The p38 MAPKs may also have kinase-independent roles, which are thought to be due to the binding to targets in the absence of phosphorylation. Protein O-Glc-N-acylation catalyzed by the OGT is regulated by MAPK14, and, although OGT does not seem to be phosphorylated by MAPK14, their interaction increases upon MAPK14 activation induced by glucose deprivation. This interaction may regulate OGT activity by recruiting it to specific targets such as neurofilament H, stimulating its O-Glc-N-acylation. Required in mid-fetal development for the growth of embryo-derived blood vessels in the labyrinth layer of the placenta. Also plays an essential role in developmental and stress-induced erythropoiesis, through regulation of EPO gene expression. Phosphorylates S100A9 at 'Thr-113'. The protein is Mitogen-activated protein kinase 14 of Pan troglodytes (Chimpanzee).